The chain runs to 473 residues: Response regulator protein FleR (473 aa).

A Response regulatory domain is found at 4–118 (KVLLVEDDRA…ALLDLVARHA (115 aa)). A 4-aspartylphosphate modification is found at Asp53. Positions 130 to 359 (PVALEPASRQ…LDNAIQRALI (230 aa)) constitute a Sigma-54 factor interaction domain. ATP is bound by residues 158–165 (GESGTGKE) and 221–230 (ADGGTILLDE).

Its function is as follows. Member of the two-component regulatory system FleS/FleR that regulates the expression of multiple genes involved in flagellar synthesis, adhesion, swarming, motility and antibiotic resistance. May function as a transcriptional activator by direct binding to a cis-acting sequence upstream of the target genes. In Pseudomonas aeruginosa (strain ATCC 15692 / DSM 22644 / CIP 104116 / JCM 14847 / LMG 12228 / 1C / PRS 101 / PAO1), this protein is Response regulator protein FleR.